The following is a 49-amino-acid chain: Large ribosomal subunit protein bL33A (49 aa).

This sequence belongs to the bacterial ribosomal protein bL33 family.

The chain is Large ribosomal subunit protein bL33A from Leuconostoc mesenteroides subsp. mesenteroides (strain ATCC 8293 / DSM 20343 / BCRC 11652 / CCM 1803 / JCM 6124 / NCDO 523 / NBRC 100496 / NCIMB 8023 / NCTC 12954 / NRRL B-1118 / 37Y).